We begin with the raw amino-acid sequence, 625 residues long: E3 ubiquitin-protein ligase synoviolin (625 aa).

The Cytoplasmic segment spans residues 1–4 (MVRA). The helical transmembrane segment at 5-25 (ALVTATSLALTGAVVAHAYFL) threads the bilayer. Residues 26–40 (KHQFYPTVVYLTKSS) lie on the Lumenal side of the membrane. Residues 41–61 (PSMAVLYIQAFVLVFLLGKLM) traverse the membrane as a helical segment. Residues 62-98 (RKVFFGQLRAAEMEHLIERSWYAVTETCLAFTVFRDD) are Cytoplasmic-facing. The helical transmembrane segment at 99-119 (FSPRFVALFTLLLFLKCFHWL) threads the bilayer. Over 120 to 135 (AEDRVDFMERSPNISW) the chain is Lumenal. The helical transmembrane segment at 136 to 156 (VFHFRVLSLMVLLGVMDFLFV) threads the bilayer. Topologically, residues 157–169 (NHACHSIITRGAS) are cytoplasmic. Residues 170 to 190 (VQLVFGFEYAILMTMVLTTFI) traverse the membrane as a helical segment. Over 191 to 212 (KYTLHTIDLQSENPWDNKAVYM) the chain is Lumenal. Residues 213–235 (LYTELFTGFIKVLLYMAFMTIMI) form a helical membrane-spanning segment. An interaction with p53/TP53 region spans residues 236–270 (KVHTFPLFAIRPMYLAMRQFKKAVTDAIMSRRAIR). Over 236-625 (KVHTFPLFAI…GNLLKLASVN (390 aa)) the chain is Cytoplasmic. Positions 291, 294, 307, 309, 312, 315, 326, and 329 each coordinate Zn(2+). The segment at 291 to 330 (CIICREEMVTGAKKLPCNHIFHSSCLRSWFQRQQTCPTCR) adopts an RING-type; atypical zinc-finger fold. 4 disordered regions span residues 337–361 (SQPN…NAPI), 390–434 (PPPA…SAAP), 462–487 (FMSS…LEQE), and 523–625 (LSPP…ASVN). Residues 342–361 (TPAPPAAQAPAPPAPANAPI) show a composition bias toward pro residues. Residues 423-434 (AQSTAEAASAAP) show a composition bias toward low complexity. Residues 462 to 471 (FMSSMPPPPS) are compositionally biased toward pro residues. The span at 523 to 564 (LSPPRSETNTGETSESANVESSPSTANTETAGQEIQSQSGES) shows a compositional bias: polar residues.

It belongs to the HRD1 family. As to quaternary structure, homodimer.

The protein resides in the endoplasmic reticulum membrane. The catalysed reaction is S-ubiquitinyl-[E2 ubiquitin-conjugating enzyme]-L-cysteine + [acceptor protein]-L-lysine = [E2 ubiquitin-conjugating enzyme]-L-cysteine + N(6)-ubiquitinyl-[acceptor protein]-L-lysine.. It functions in the pathway protein modification; protein ubiquitination. E3 ubiquitin-protein ligase which accepts ubiquitin specifically from endoplasmic reticulum-associated UBC7 E2 ligase and transfers it to substrates, promoting their degradation. Component of the endoplasmic reticulum quality control (ERQC) system also called ER-associated degradation (ERAD) involved in ubiquitin-dependent degradation of misfolded endoplasmic reticulum proteins. Also promotes the degradation of normal but naturally short-lived proteins. Protects cells from ER stress-induced apoptosis. Sequesters p53 in the cytoplasm and promotes its degradation, thereby negatively regulating its biological function in transcription, cell cycle regulation and apoptosis. The polypeptide is E3 ubiquitin-protein ligase synoviolin (syvn1) (Danio rerio (Zebrafish)).